Here is a 658-residue protein sequence, read N- to C-terminus: Glycogen debranching enzyme (658 aa).

Residue Asp336 is the Nucleophile of the active site. Residue Glu371 is the Proton donor of the active site.

Belongs to the glycosyl hydrolase 13 family.

The enzyme catalyses Hydrolysis of (1-&gt;6)-alpha-D-glucosidic linkages to branches with degrees of polymerization of three or four glucose residues in limit dextrin.. It functions in the pathway glycan degradation; glycogen degradation. Functionally, removes maltotriose and maltotetraose chains that are attached by 1,6-alpha-linkage to the limit dextrin main chain, generating a debranched limit dextrin. The chain is Glycogen debranching enzyme from Klebsiella pneumoniae subsp. pneumoniae (strain ATCC 700721 / MGH 78578).